Here is a 299-residue protein sequence, read N- to C-terminus: tRNA dimethylallyltransferase 2 (299 aa).

9-16 (GPTGVGKT) serves as a coordination point for ATP. Residue 11–16 (TGVGKT) participates in substrate binding. The interaction with substrate tRNA stretch occupies residues 34–37 (DSRQ).

Belongs to the IPP transferase family. In terms of assembly, monomer. Requires Mg(2+) as cofactor.

The enzyme catalyses adenosine(37) in tRNA + dimethylallyl diphosphate = N(6)-dimethylallyladenosine(37) in tRNA + diphosphate. Functionally, catalyzes the transfer of a dimethylallyl group onto the adenine at position 37 in tRNAs that read codons beginning with uridine, leading to the formation of N6-(dimethylallyl)adenosine (i(6)A). In Parabacteroides distasonis (strain ATCC 8503 / DSM 20701 / CIP 104284 / JCM 5825 / NCTC 11152), this protein is tRNA dimethylallyltransferase 2.